A 236-amino-acid chain; its full sequence is Endonuclease V (236 aa).

Asp47 and Asp115 together coordinate Mg(2+).

Belongs to the endonuclease V family. Requires Mg(2+) as cofactor.

It localises to the cytoplasm. It carries out the reaction Endonucleolytic cleavage at apurinic or apyrimidinic sites to products with a 5'-phosphate.. DNA repair enzyme involved in the repair of deaminated bases. Selectively cleaves double-stranded DNA at the second phosphodiester bond 3' to a deoxyinosine leaving behind the intact lesion on the nicked DNA. This Xanthomonas campestris pv. campestris (strain 8004) protein is Endonuclease V.